The primary structure comprises 355 residues: Probable sugar phosphate/phosphate translocator At3g10290 (355 aa).

A disordered region spans residues 19–51 (QKKQPNLSISSTTKMNKKNPDQKSDMSSSSSSP). Residues 22-32 (QPNLSISSTTK) are compositionally biased toward polar residues. Helical transmembrane passes span 55–75 (TLFI…VLLL), 89–109 (IFLT…SIVF), 124–144 (FLKV…GNIS), 150–170 (VSFN…FAYI), 177–197 (AWVT…ASGG), 198–218 (EPGF…ARAF), 239–259 (LMLY…IFME), 277–297 (YILL…NFLV), 305–325 (TLQV…ILLF), and 328–348 (PVTV…VAYG).

This sequence belongs to the TPT transporter family. TPT (TC 2.A.7.9) subfamily.

Its subcellular location is the membrane. This chain is Probable sugar phosphate/phosphate translocator At3g10290, found in Arabidopsis thaliana (Mouse-ear cress).